The following is a 130-amino-acid chain: Small ribosomal subunit protein uS9 (130 aa).

Belongs to the universal ribosomal protein uS9 family.

This is Small ribosomal subunit protein uS9 from Hahella chejuensis (strain KCTC 2396).